A 137-amino-acid chain; its full sequence is Small ribosomal subunit protein uS12 (137 aa).

A disordered region spans residues 1–44; sequence MPTINQLVRKGRKSRTSKSDAPALNFGYNSMKKKATDNPAPQKR. Asp102 carries the post-translational modification 3-methylthioaspartic acid.

The protein belongs to the universal ribosomal protein uS12 family. Part of the 30S ribosomal subunit. Contacts proteins S8 and S17. May interact with IF1 in the 30S initiation complex.

With S4 and S5 plays an important role in translational accuracy. In terms of biological role, interacts with and stabilizes bases of the 16S rRNA that are involved in tRNA selection in the A site and with the mRNA backbone. Located at the interface of the 30S and 50S subunits, it traverses the body of the 30S subunit contacting proteins on the other side and probably holding the rRNA structure together. The combined cluster of proteins S8, S12 and S17 appears to hold together the shoulder and platform of the 30S subunit. The polypeptide is Small ribosomal subunit protein uS12 (Latilactobacillus sakei subsp. sakei (strain 23K) (Lactobacillus sakei subsp. sakei)).